A 435-amino-acid polypeptide reads, in one-letter code: Xylose isomerase (435 aa).

Active-site residues include histidine 100 and aspartate 103. Mg(2+) is bound by residues glutamate 231, glutamate 267, histidine 270, aspartate 295, aspartate 306, aspartate 308, and aspartate 338.

The protein belongs to the xylose isomerase family. Homotetramer. Mg(2+) serves as cofactor.

It localises to the cytoplasm. It catalyses the reaction alpha-D-xylose = alpha-D-xylulofuranose. The chain is Xylose isomerase from Brucella suis (strain ATCC 23445 / NCTC 10510).